We begin with the raw amino-acid sequence, 126 residues long: Protein ApaG (126 aa).

The 125-residue stretch at 2–126 (SALDTSIRVE…FRLATPGLLH (125 aa)) folds into the ApaG domain.

This is Protein ApaG from Shewanella sp. (strain W3-18-1).